The chain runs to 356 residues: Heparan sulfate 2-O-sulfotransferase 1 (356 aa).

The Cytoplasmic portion of the chain corresponds to 1 to 11 (MGLLRIMLPPK). The helical; Signal-anchor for type II membrane protein transmembrane segment at 12–28 (LQLLAVLVFGVAVLFLE) threads the bilayer. A coiled-coil region spans residues 24–51 (VLFLENQIQKLEESRGKLERAIARHEVR). Over 29-356 (NQIQKLEESR…FYEKIYPKSN (328 aa)) the chain is Lumenal. Positions 83, 84, 85, 86, 87, and 88 each coordinate adenosine 3',5'-bisphosphate. N-linked (GlcNAc...) asparagine glycosylation is found at asparagine 108 and asparagine 127. Catalysis depends on residues histidine 140 and histidine 142. Adenosine 3',5'-bisphosphate-binding residues include arginine 164 and serine 172. 2 disulfide bridges follow: cysteine 201–cysteine 209 and cysteine 222–cysteine 228. The adenosine 3',5'-bisphosphate site is built by tyrosine 279, serine 285, threonine 290, and lysine 293.

Belongs to the sulfotransferase 3 family. As to quaternary structure, homotrimer. As to expression, expressed in heart, limb, head and trunk. At stages 20 and 24, it is expressed in the most regions of the first and second pharyngeal arche. In both wing and leg buds, it is detected at the overlying ectoderm and mesenchyme throughout stages 21, 23 and 24.

It localises to the golgi apparatus membrane. Functionally, catalyzes the transfer of a sulfo group from 3'-phospho-5'-adenylyl sulfate (PAPS) to the 2-OH position of iduronic acid (IdoA) or glucuronic acid (GlcA) within the heparan sulfate (HS) chain and participates in HS biosynthesis. This is Heparan sulfate 2-O-sulfotransferase 1 from Gallus gallus (Chicken).